We begin with the raw amino-acid sequence, 191 residues long: Elongation factor P (191 aa).

Position 34 is an N6-(3,6-diaminohexanoyl)-5-hydroxylysine (Lys-34).

It belongs to the elongation factor P family. In terms of processing, may be beta-lysylated on the epsilon-amino group of Lys-34 by the combined action of EpmA and EpmB, and then hydroxylated on the C5 position of the same residue by EpmC (if this protein is present). Lysylation is critical for the stimulatory effect of EF-P on peptide-bond formation. The lysylation moiety may extend toward the peptidyltransferase center and stabilize the terminal 3-CCA end of the tRNA. Hydroxylation of the C5 position on Lys-34 may allow additional potential stabilizing hydrogen-bond interactions with the P-tRNA.

The protein resides in the cytoplasm. It functions in the pathway protein biosynthesis; polypeptide chain elongation. Its function is as follows. Involved in peptide bond synthesis. Alleviates ribosome stalling that occurs when 3 or more consecutive Pro residues or the sequence PPG is present in a protein, possibly by augmenting the peptidyl transferase activity of the ribosome. Modification of Lys-34 is required for alleviation. The sequence is that of Elongation factor P from Psychrobacter sp. (strain PRwf-1).